We begin with the raw amino-acid sequence, 288 residues long: Protein shisa-2 (288 aa).

The first 23 residues, 1-23 (MWLEGSPLAVLAAVSFLLSVLAA), serve as a signal peptide directing secretion. Residues 24–110 (AQGSGEYCHG…DSTAVPIYVP (87 aa)) are Extracellular-facing. The helical transmembrane segment at 111–131 (FLIVGSVFVAFIIVGSLVAIC) threads the bilayer. The Cytoplasmic segment spans residues 132–288 (CCRCLRPKQE…EQMMYPAVTV (157 aa)). Positions 161–188 (SSASTSRGSSSRQSSTAASSSSSANSGA) are enriched in low complexity. Positions 161–198 (SSASTSRGSSSRQSSTAASSSSSANSGARPPPTRSQTN) are disordered.

The protein belongs to the shisa family. Interacts with fzd8 and fgfr1.

The protein localises to the endoplasmic reticulum membrane. Plays an essential role in the maturation of presomitic mesoderm cells by individual attenuation of both fgf and wnt signaling. Inhibits both wnt and fgf signaling through the regulation of protein maturation and cell surface transportation of their receptors within the endoplasmic reticulum. The sequence is that of Protein shisa-2 (shisa2) from Xenopus laevis (African clawed frog).